A 356-amino-acid polypeptide reads, in one-letter code: S-adenosylmethionine:tRNA ribosyltransferase-isomerase (356 aa).

It belongs to the QueA family. In terms of assembly, monomer.

Its subcellular location is the cytoplasm. The catalysed reaction is 7-aminomethyl-7-carbaguanosine(34) in tRNA + S-adenosyl-L-methionine = epoxyqueuosine(34) in tRNA + adenine + L-methionine + 2 H(+). The protein operates within tRNA modification; tRNA-queuosine biosynthesis. Functionally, transfers and isomerizes the ribose moiety from AdoMet to the 7-aminomethyl group of 7-deazaguanine (preQ1-tRNA) to give epoxyqueuosine (oQ-tRNA). The protein is S-adenosylmethionine:tRNA ribosyltransferase-isomerase of Yersinia pseudotuberculosis serotype IB (strain PB1/+).